A 150-amino-acid polypeptide reads, in one-letter code: Large ribosomal subunit protein bL9 (150 aa).

This sequence belongs to the bacterial ribosomal protein bL9 family.

In terms of biological role, binds to the 23S rRNA. The sequence is that of Large ribosomal subunit protein bL9 from Shewanella oneidensis (strain ATCC 700550 / JCM 31522 / CIP 106686 / LMG 19005 / NCIMB 14063 / MR-1).